The following is a 207-amino-acid chain: Phenazine biosynthesis protein PhzD (207 aa).

Asp38 (proton donor) is an active-site residue. Substrate-binding positions include Gln78, Arg87, Lys122, and 151-155; that span reads YAHVG.

The protein belongs to the isochorismatase family. Homodimer.

It carries out the reaction (2S)-2-amino-4-deoxychorismate + H2O = (5S,6S)-6-amino-5-hydroxycyclohexa-1,3-diene-1-carboxyate + pyruvate. Its pathway is antibiotic biosynthesis; phenazine biosynthesis. Functionally, involved in the biosynthesis of the antibiotic phenazine, a nitrogen-containing heterocyclic molecule having important roles in virulence, competition and biological control. Catalyzes the hydrolysis of the vinyl ether functional group of 2-amino-2-deoxyisochorismate (ADIC), yielding pyruvate and trans-2,3-dihydro-3-hydroxyanthranilic acid (DHHA). The chain is Phenazine biosynthesis protein PhzD from Pseudomonas fluorescens.